The sequence spans 180 residues: Bifunctional protein PyrR (180 aa).

The PRPP-binding motif lies at V101 to T113.

This sequence belongs to the purine/pyrimidine phosphoribosyltransferase family. PyrR subfamily. Homodimer and homohexamer; in equilibrium.

It catalyses the reaction UMP + diphosphate = 5-phospho-alpha-D-ribose 1-diphosphate + uracil. Regulates transcriptional attenuation of the pyrimidine nucleotide (pyr) operon by binding in a uridine-dependent manner to specific sites on pyr mRNA. This disrupts an antiterminator hairpin in the RNA and favors formation of a downstream transcription terminator, leading to a reduced expression of downstream genes. In terms of biological role, also displays a weak uracil phosphoribosyltransferase activity which is not physiologically significant. The chain is Bifunctional protein PyrR from Bacillus mycoides (strain KBAB4) (Bacillus weihenstephanensis).